The sequence spans 371 residues: Prephenate dehydrogenase (371 aa).

The Prephenate/arogenate dehydrogenase domain occupies 6-295 (DTILLAGLGL…GLPLRQKGAI (290 aa)). Residue 7–37 (TILLAGLGLIGGSIALAIKKNHPGKRIIGID) participates in NAD(+) binding. The 72-residue stretch at 300–371 (DLYVDVPDHP…RAEYETFYAD (72 aa)) folds into the ACT domain.

This sequence belongs to the prephenate/arogenate dehydrogenase family.

It carries out the reaction prephenate + NAD(+) = 3-(4-hydroxyphenyl)pyruvate + CO2 + NADH. It participates in amino-acid biosynthesis; L-tyrosine biosynthesis; (4-hydroxyphenyl)pyruvate from prephenate (NAD(+) route): step 1/1. The chain is Prephenate dehydrogenase (tyrA) from Bacillus subtilis (strain 168).